A 246-amino-acid polypeptide reads, in one-letter code: 1-(5-phosphoribosyl)-5-[(5-phosphoribosylamino)methylideneamino] imidazole-4-carboxamide isomerase (246 aa).

Catalysis depends on aspartate 7, which acts as the Proton acceptor. Residue aspartate 129 is the Proton donor of the active site.

Belongs to the HisA/HisF family.

It is found in the cytoplasm. It catalyses the reaction 1-(5-phospho-beta-D-ribosyl)-5-[(5-phospho-beta-D-ribosylamino)methylideneamino]imidazole-4-carboxamide = 5-[(5-phospho-1-deoxy-D-ribulos-1-ylimino)methylamino]-1-(5-phospho-beta-D-ribosyl)imidazole-4-carboxamide. It participates in amino-acid biosynthesis; L-histidine biosynthesis; L-histidine from 5-phospho-alpha-D-ribose 1-diphosphate: step 4/9. This chain is 1-(5-phosphoribosyl)-5-[(5-phosphoribosylamino)methylideneamino] imidazole-4-carboxamide isomerase, found in Buchnera aphidicola subsp. Acyrthosiphon pisum (strain Tuc7).